A 265-amino-acid chain; its full sequence is Small ribosomal subunit protein uS3 (265 aa).

Positions 39 to 107 constitute a KH type-2 domain; that stretch reads VREFLKKKLK…PVHVNIEEIR (69 aa). A disordered region spans residues 211 to 265; it reads NDAPVVEEPQEDRRRRPGRPEGRRREGEGRPAGNRRGGAGAGRRAAPGADAKSGE. Over residues 221–239 the composition is skewed to basic and acidic residues; it reads EDRRRRPGRPEGRRREGEG.

The protein belongs to the universal ribosomal protein uS3 family. Part of the 30S ribosomal subunit. Forms a tight complex with proteins S10 and S14.

In terms of biological role, binds the lower part of the 30S subunit head. Binds mRNA in the 70S ribosome, positioning it for translation. This Cupriavidus metallidurans (strain ATCC 43123 / DSM 2839 / NBRC 102507 / CH34) (Ralstonia metallidurans) protein is Small ribosomal subunit protein uS3.